Reading from the N-terminus, the 350-residue chain is Biotin synthase (350 aa).

A Radical SAM core domain is found at 63–281 (GDIELATLLS…IAVARITMPK (219 aa)). Residues Cys78, Cys82, and Cys85 each contribute to the [4Fe-4S] cluster site. [2Fe-2S] cluster is bound by residues Cys122, Cys153, Cys213, and Arg285.

This sequence belongs to the radical SAM superfamily. Biotin synthase family. In terms of assembly, homodimer. [4Fe-4S] cluster is required as a cofactor. [2Fe-2S] cluster serves as cofactor.

It carries out the reaction (4R,5S)-dethiobiotin + (sulfur carrier)-SH + 2 reduced [2Fe-2S]-[ferredoxin] + 2 S-adenosyl-L-methionine = (sulfur carrier)-H + biotin + 2 5'-deoxyadenosine + 2 L-methionine + 2 oxidized [2Fe-2S]-[ferredoxin]. It participates in cofactor biosynthesis; biotin biosynthesis; biotin from 7,8-diaminononanoate: step 2/2. In terms of biological role, catalyzes the conversion of dethiobiotin (DTB) to biotin by the insertion of a sulfur atom into dethiobiotin via a radical-based mechanism. This is Biotin synthase from Acidovorax sp. (strain JS42).